Consider the following 2131-residue polypeptide: Protein Ycf2 (2131 aa).

ATP is bound at residue 1484-1491 (GSIGTGRS).

Belongs to the Ycf2 family.

It is found in the plastid. It localises to the chloroplast stroma. In terms of biological role, probable ATPase of unknown function. Its presence in a non-photosynthetic plant (Epifagus virginiana) and experiments in tobacco indicate that it has an essential function which is probably not related to photosynthesis. The polypeptide is Protein Ycf2 (ycf2-A) (Spinacia oleracea (Spinach)).